Consider the following 715-residue polypeptide: 1,4-alpha-glucan branching enzyme GlgB (715 aa).

The active-site Nucleophile is Asp396. The active-site Proton donor is the Glu449.

The protein belongs to the glycosyl hydrolase 13 family. GlgB subfamily. Monomer.

The enzyme catalyses Transfers a segment of a (1-&gt;4)-alpha-D-glucan chain to a primary hydroxy group in a similar glucan chain.. The protein operates within glycan biosynthesis; glycogen biosynthesis. Functionally, catalyzes the formation of the alpha-1,6-glucosidic linkages in glycogen by scission of a 1,4-alpha-linked oligosaccharide from growing alpha-1,4-glucan chains and the subsequent attachment of the oligosaccharide to the alpha-1,6 position. This chain is 1,4-alpha-glucan branching enzyme GlgB, found in Vibrio vulnificus (strain YJ016).